We begin with the raw amino-acid sequence, 270 residues long: Small ribosomal subunit protein bS1m (270 aa).

The tract at residues 218–250 is disordered; the sequence is TKQGFKHLGPKPLAYTEKKRETTKQSTKNNVFQ.

It belongs to the bacterial ribosomal protein bS1 family.

Its subcellular location is the mitochondrion. This chain is Small ribosomal subunit protein bS1m (RPS1), found in Marchantia polymorpha (Common liverwort).